The chain runs to 214 residues: MLGIIDYGMGNLHSVSKALERLSWSYIVSEQPEELQKADGLILPGVGSFHDAMSILNETGLTAFIKDWVDEGKPLLGICLGMQLLFEESEENKRTKGLSLLPGRVIRFPGVATDGSTYKVPHMGWNQLTFRKPNHPLLTDVEEGHVYFVHSYVVKTDADDVLLATSHYYETVPAVVGRGNILGTQFHPEKSSNVGMSILRNYGAMVEKGVKARG.

Residues 1 to 212 (MLGIIDYGMG…GAMVEKGVKA (212 aa)) form the Glutamine amidotransferase type-1 domain. The active-site Nucleophile is the cysteine 79. Catalysis depends on residues histidine 187 and glutamate 189.

In terms of assembly, heterodimer of HisH and HisF.

Its subcellular location is the cytoplasm. It carries out the reaction 5-[(5-phospho-1-deoxy-D-ribulos-1-ylimino)methylamino]-1-(5-phospho-beta-D-ribosyl)imidazole-4-carboxamide + L-glutamine = D-erythro-1-(imidazol-4-yl)glycerol 3-phosphate + 5-amino-1-(5-phospho-beta-D-ribosyl)imidazole-4-carboxamide + L-glutamate + H(+). It catalyses the reaction L-glutamine + H2O = L-glutamate + NH4(+). It participates in amino-acid biosynthesis; L-histidine biosynthesis; L-histidine from 5-phospho-alpha-D-ribose 1-diphosphate: step 5/9. IGPS catalyzes the conversion of PRFAR and glutamine to IGP, AICAR and glutamate. The HisH subunit catalyzes the hydrolysis of glutamine to glutamate and ammonia as part of the synthesis of IGP and AICAR. The resulting ammonia molecule is channeled to the active site of HisF. The protein is Imidazole glycerol phosphate synthase subunit HisH (hisH) of Halalkalibacterium halodurans (strain ATCC BAA-125 / DSM 18197 / FERM 7344 / JCM 9153 / C-125) (Bacillus halodurans).